Here is a 404-residue protein sequence, read N- to C-terminus: Probable tRNA sulfurtransferase (404 aa).

The THUMP domain maps to 60 to 165; it reads TAVAESLKQV…EEAAYLSYET (106 aa). ATP is bound by residues 183–184, 208–209, Arg265, Gly287, and Gln296; these read ML and HF.

This sequence belongs to the ThiI family.

The protein localises to the cytoplasm. It carries out the reaction [ThiI sulfur-carrier protein]-S-sulfanyl-L-cysteine + a uridine in tRNA + 2 reduced [2Fe-2S]-[ferredoxin] + ATP + H(+) = [ThiI sulfur-carrier protein]-L-cysteine + a 4-thiouridine in tRNA + 2 oxidized [2Fe-2S]-[ferredoxin] + AMP + diphosphate. The catalysed reaction is [ThiS sulfur-carrier protein]-C-terminal Gly-Gly-AMP + S-sulfanyl-L-cysteinyl-[cysteine desulfurase] + AH2 = [ThiS sulfur-carrier protein]-C-terminal-Gly-aminoethanethioate + L-cysteinyl-[cysteine desulfurase] + A + AMP + 2 H(+). It functions in the pathway cofactor biosynthesis; thiamine diphosphate biosynthesis. In terms of biological role, catalyzes the ATP-dependent transfer of a sulfur to tRNA to produce 4-thiouridine in position 8 of tRNAs, which functions as a near-UV photosensor. Also catalyzes the transfer of sulfur to the sulfur carrier protein ThiS, forming ThiS-thiocarboxylate. This is a step in the synthesis of thiazole, in the thiamine biosynthesis pathway. The sulfur is donated as persulfide by IscS. The polypeptide is Probable tRNA sulfurtransferase (Streptococcus pneumoniae (strain 70585)).